Reading from the N-terminus, the 432-residue chain is Elongation factor 1-gamma (432 aa).

A GST N-terminal domain is found at Leu1 to Ser82. One can recognise a GST C-terminal domain in the interval Thr83 to Phe211. Residues Lys142 and Lys207 each carry the N6-acetyllysine modification. A compositionally biased stretch (basic and acidic residues) spans Phe216 to Ala249. The segment at Phe216 to Leu258 is disordered. Residue Lys248 forms a Glycyl lysine isopeptide (Lys-Gly) (interchain with G-Cter in SUMO1) linkage. The region spanning Ala271–Lys432 is the EF-1-gamma C-terminal domain. Residue Lys280 forms a Glycyl lysine isopeptide (Lys-Gly) (interchain with G-Cter in SUMO2) linkage. Lys396 is subject to N6-acetyllysine. Lys429 bears the N6-acetyllysine; alternate mark. Lys429 is modified (N6-malonyllysine; alternate).

EF-1 is composed of four subunits: alpha, beta, delta, and gamma.

In terms of biological role, probably plays a role in anchoring the complex to other cellular components. This is Elongation factor 1-gamma (EEF1G) from Sus scrofa (Pig).